The following is a 553-amino-acid chain: Glutamine--tRNA ligase (553 aa).

The short motif at 34-44 is the 'HIGH' region element; it reads PEPNGYLHIGH. Residues 35 to 37 and 41 to 47 contribute to the ATP site; these read EPN and HIGHAKS. L-glutamine contacts are provided by Asp-67 and Tyr-212. ATP contacts are provided by residues Thr-231, 261–262, and 269–271; these read RL and MSK. The 'KMSKS' region signature appears at 268-272; sequence IMSKR.

This sequence belongs to the class-I aminoacyl-tRNA synthetase family. As to quaternary structure, monomer.

It localises to the cytoplasm. It catalyses the reaction tRNA(Gln) + L-glutamine + ATP = L-glutaminyl-tRNA(Gln) + AMP + diphosphate. The sequence is that of Glutamine--tRNA ligase from Tolumonas auensis (strain DSM 9187 / NBRC 110442 / TA 4).